We begin with the raw amino-acid sequence, 122 residues long: Small ribosomal subunit protein uS13 (122 aa).

Residues 94-122 (LSLPVRGQRTKTNSRTRKGKRKTVAGKKK) form a disordered region. The span at 101 to 122 (QRTKTNSRTRKGKRKTVAGKKK) shows a compositional bias: basic residues.

It belongs to the universal ribosomal protein uS13 family. Part of the 30S ribosomal subunit. Forms a loose heterodimer with protein S19. Forms two bridges to the 50S subunit in the 70S ribosome.

Functionally, located at the top of the head of the 30S subunit, it contacts several helices of the 16S rRNA. In the 70S ribosome it contacts the 23S rRNA (bridge B1a) and protein L5 of the 50S subunit (bridge B1b), connecting the 2 subunits; these bridges are implicated in subunit movement. Contacts the tRNAs in the A and P-sites. This is Small ribosomal subunit protein uS13 from Chlamydia trachomatis serovar A (strain ATCC VR-571B / DSM 19440 / HAR-13).